The following is a 553-amino-acid chain: MTRGGPGGRPGLPQPPPLLLLLLLLPLLLVTAEPPKPAGVYYATAYWMPAEKTVQVKNVMDKNGDAYGFYNNSVKTTGWGILEIRAGYGSQTLSNEIIMFVAGFLEGYLTAPHMNDHYTNLYPQLITKPSIMDKVQDFMEKQDKWTRKNIKEYKTDSFWRHTGYVMAQIDGLYVGAKKRAILEGTKPMTLFQIQFLNSVGDLLDLIPSLSPTKNGSLKVFKRWDMGHCSALIKVLPGFENILFAHSSWYTYAAMLRIYKHWDFNVIDKDTSSSRLSFSSYPGFLESLDDFYILSSGLILLQTTNSVFNKTLLKQVIPETLLSWQRVRVANMMADSGKRWADIFSKYNSGTYNNQYMVLDLKKVKLNHSLDKGTLYIVEQIPTYVEYSEQTDVLRKGYWPSYNVPFHEKIYNWSGYPLLVQKLGLDYSYDLAPRAKIFRRDQGKVTDTASMKYIMRYNNYKKDPYSRGDPCNTICCREDLNSPNPSPGGCYDTKVADIYLASQYTSYAISGPTVQGGLPVFRWDRFNKTLHQGMPEVYNFDFITMKPILKLDIK.

A signal peptide spans 1–38; sequence MTRGGPGGRPGLPQPPPLLLLLLLLPLLLVTAEPPKPA. Residue Asn-71 is glycosylated (N-linked (GlcNAc...) (high mannose) asparagine; alternate). Asn-71 carries an N-linked (GlcNAc...) (hybrid) asparagine; alternate glycan. The propeptide at 209–227 is removed in mature form; it reads LSPTKNGSLKVFKRWDMGH. N-linked (GlcNAc...) (high mannose) asparagine; alternate glycans are attached at residues Asn-308 and Asn-366. N-linked (GlcNAc...) (hybrid) asparagine; alternate glycosylation is found at Asn-308 and Asn-366. A glycan (N-linked (GlcNAc...) asparagine) is linked at Asn-411. 2 cysteine pairs are disulfide-bonded: Cys-470-Cys-475 and Cys-474-Cys-489. Asn-526 carries an N-linked (GlcNAc...) (high mannose) asparagine; alternate glycan. The N-linked (GlcNAc...) (hybrid) asparagine; alternate glycan is linked to Asn-526.

This sequence belongs to the phospholipase B-like family. May form a homodimer, each monomer is composed of a chain A and a chain B. In terms of processing, the maturation cleavages that produces chains A and B are required to open the putative substrate binding pocket. Both chains A and B remain associated in the mature protein. Expressed in neutrophils and monocytes.

It localises to the lysosome. Functionally, in view of the small size of the putative binding pocket, it has been proposed that it may act as an amidase or a peptidase. Exhibits a weak phospholipase activity, acting on various phospholipids, including phosphatidylcholine, phosphatidylinositol, phosphatidylethanolamine and lysophospholipids. The chain is Phospholipase B-like 1 (PLBD1) from Homo sapiens (Human).